The following is a 142-amino-acid chain: Ribosome-binding factor A (142 aa).

The span at 118–130 (DKAKQKQAGREDD) shows a compositional bias: basic and acidic residues. The segment at 118–142 (DKAKQKQAGREDDTPSVDEQEKDTD) is disordered. The span at 131–142 (TPSVDEQEKDTD) shows a compositional bias: acidic residues.

The protein belongs to the RbfA family. As to quaternary structure, monomer. Binds 30S ribosomal subunits, but not 50S ribosomal subunits or 70S ribosomes.

The protein localises to the cytoplasm. Functionally, one of several proteins that assist in the late maturation steps of the functional core of the 30S ribosomal subunit. Associates with free 30S ribosomal subunits (but not with 30S subunits that are part of 70S ribosomes or polysomes). Required for efficient processing of 16S rRNA. May interact with the 5'-terminal helix region of 16S rRNA. This is Ribosome-binding factor A from Shewanella denitrificans (strain OS217 / ATCC BAA-1090 / DSM 15013).